A 708-amino-acid polypeptide reads, in one-letter code: Leukotoxin translocation ATP-binding protein LktB (708 aa).

Residues 1-126 enclose the Peptidase C39 domain; the sequence is MEANHQRNDL…ACYQGQLILV (126 aa). Residues 155–437 form the ABC transmembrane type-1 domain; sequence FLETLIVSIF…LAQLWQDFQQ (283 aa). 5 helical membrane-spanning segments follow: residues 159–179, 192–212, 270–290, 296–316, and 389–409; these read LIVS…FQVV, LNII…LSGL, ALTS…MWYY, LVIL…SPIL, and VMVI…LSIG. The ABC transporter domain occupies 469-704; the sequence is ISFKNIRFRY…SNGLYSYLHQ (236 aa). 503–510 is a binding site for ATP; sequence GRSGSGKS.

It belongs to the ABC transporter superfamily. Protein-1 exporter (TC 3.A.1.109) family. In terms of assembly, homodimer.

It localises to the cell inner membrane. It catalyses the reaction ATP + H2O + proteinSide 1 = ADP + phosphate + proteinSide 2.. In terms of biological role, part of the ABC transporter complex LktBD involved in leukotoxin export. Transmembrane domains (TMD) form a pore in the inner membrane and the ATP-binding domain (NBD) is responsible for energy generation. This chain is Leukotoxin translocation ATP-binding protein LktB (lktB), found in Mannheimia haemolytica (Pasteurella haemolytica).